A 328-amino-acid chain; its full sequence is Probable tRNA pseudouridine synthase B (328 aa).

Residue Asp-71 is the Nucleophile of the active site. Positions 238-313 (LPKIWVRDSA…LVARVDRVIM (76 aa)) constitute a PUA domain.

It belongs to the pseudouridine synthase TruB family. Type 2 subfamily.

It carries out the reaction uridine(55) in tRNA = pseudouridine(55) in tRNA. Could be responsible for synthesis of pseudouridine from uracil-55 in the psi GC loop of transfer RNAs. This is Probable tRNA pseudouridine synthase B from Pyrobaculum islandicum (strain DSM 4184 / JCM 9189 / GEO3).